The chain runs to 536 residues: Testis-specific expressed protein 55 (536 aa).

The span at 1 to 11 shows a compositional bias: low complexity; that stretch reads MEEPPQEALAE. Disordered regions lie at residues 1-287 and 328-348; these read MEEP…PGTS and SNADQPPVDNAHYTESDQTDH. Residues 35–52 are compositionally biased toward basic and acidic residues; sequence QKNQAERKADNHTAHRIA. Composition is skewed to polar residues over residues 62–85 and 105–136; these read QAESSIFSQATNGVAEQNGHSTPG and QVNQTPSEQTKGKASSQANNVQHEQSDGQVSG. Basic and acidic residues-rich tracts occupy residues 138 to 158 and 173 to 222; these read TEERTAEQTERRLPTQAERRT and RGSR…ERRP. The segment covering 226 to 242 has biased composition (low complexity); sequence IDSGSSVPSDQSPSVQI. Over residues 243–255 the composition is skewed to polar residues; that stretch reads DSGSSVPSDQRPS. A compositionally biased stretch (basic and acidic residues) spans 339–348; it reads HYTESDQTDH.

Testis-specific.

Its subcellular location is the nucleus. It is found in the cell projection. It localises to the cilium. The protein localises to the flagellum. This Homo sapiens (Human) protein is Testis-specific expressed protein 55.